Consider the following 73-residue polypeptide: MVVVDARGSYCPGPLMEMIKTLKQVEVGEVVEVLSSDESSAKDIPEWVKKAGHELVEVKKEEDYWRIVVKKLK.

The active-site Cysteine persulfide intermediate is Cys11.

It belongs to the sulfur carrier protein TusA family.

This Archaeoglobus fulgidus (strain ATCC 49558 / DSM 4304 / JCM 9628 / NBRC 100126 / VC-16) protein is Putative sulfur carrier protein AF_0556.